A 229-amino-acid polypeptide reads, in one-letter code: PKHD-type hydroxylase BRADO6316 (229 aa).

The Fe2OG dioxygenase domain occupies 78 to 180 (QIFPPLFNRY…RVASFFWLQS (103 aa)). Residues His-98, Asp-100, and His-161 each coordinate Fe cation. Arg-171 serves as a coordination point for 2-oxoglutarate.

Requires Fe(2+) as cofactor. It depends on L-ascorbate as a cofactor.

This Bradyrhizobium sp. (strain ORS 278) protein is PKHD-type hydroxylase BRADO6316.